Consider the following 103-residue polypeptide: UPF0145 protein BT9727_3206 (103 aa).

It belongs to the UPF0145 family.

In Bacillus thuringiensis subsp. konkukian (strain 97-27), this protein is UPF0145 protein BT9727_3206.